Reading from the N-terminus, the 203-residue chain is FMN-dependent NADH:quinone oxidoreductase (203 aa).

143–146 is a binding site for FMN; sequence SNGG.

This sequence belongs to the azoreductase type 1 family. In terms of assembly, homodimer. FMN serves as cofactor.

It catalyses the reaction 2 a quinone + NADH + H(+) = 2 a 1,4-benzosemiquinone + NAD(+). It carries out the reaction N,N-dimethyl-1,4-phenylenediamine + anthranilate + 2 NAD(+) = 2-(4-dimethylaminophenyl)diazenylbenzoate + 2 NADH + 2 H(+). Functionally, quinone reductase that provides resistance to thiol-specific stress caused by electrophilic quinones. Also exhibits azoreductase activity. Catalyzes the reductive cleavage of the azo bond in aromatic azo compounds to the corresponding amines. The sequence is that of FMN-dependent NADH:quinone oxidoreductase from Streptococcus suis (strain 98HAH33).